A 271-amino-acid polypeptide reads, in one-letter code: ATP synthase subunit a (271 aa).

Transmembrane regions (helical) follow at residues 47–67 (WENIIFAILVASLISLVAYLG), 107–127 (FLGTLFIYIFTMNIFGMVPLM), 133–153 (SLNITAALAICVFCLVQFLNI), 209–229 (ILIGTFALMGVVMISSVETFV), and 235–255 (LPFMFLGLLTSFMQALVFTLL).

The protein belongs to the ATPase A chain family. F-type ATPases have 2 components, CF(1) - the catalytic core - and CF(0) - the membrane proton channel. CF(1) has five subunits: alpha(3), beta(3), gamma(1), delta(1), epsilon(1). CF(0) has three main subunits: a(1), b(2) and c(9-12). The alpha and beta chains form an alternating ring which encloses part of the gamma chain. CF(1) is attached to CF(0) by a central stalk formed by the gamma and epsilon chains, while a peripheral stalk is formed by the delta and b chains.

It is found in the cell inner membrane. In terms of biological role, key component of the proton channel; it plays a direct role in the translocation of protons across the membrane. This chain is ATP synthase subunit a, found in Protochlamydia amoebophila (strain UWE25).